A 323-amino-acid polypeptide reads, in one-letter code: tRNA U34 carboxymethyltransferase (323 aa).

Carboxy-S-adenosyl-L-methionine contacts are provided by residues Lys91, Trp105, Lys110, Gly130, Asp152 to Ser154, Ile181 to Glu182, Met196, Tyr200, and Arg315.

The protein belongs to the class I-like SAM-binding methyltransferase superfamily. CmoB family. Homotetramer.

It catalyses the reaction carboxy-S-adenosyl-L-methionine + 5-hydroxyuridine(34) in tRNA = 5-carboxymethoxyuridine(34) in tRNA + S-adenosyl-L-homocysteine + H(+). Functionally, catalyzes carboxymethyl transfer from carboxy-S-adenosyl-L-methionine (Cx-SAM) to 5-hydroxyuridine (ho5U) to form 5-carboxymethoxyuridine (cmo5U) at position 34 in tRNAs. The protein is tRNA U34 carboxymethyltransferase of Vibrio atlanticus (strain LGP32) (Vibrio splendidus (strain Mel32)).